Consider the following 174-residue polypeptide: Chorismate pyruvate-lyase (174 aa).

Substrate contacts are provided by M36, R78, L116, and E157.

The protein belongs to the UbiC family. As to quaternary structure, monomer.

The protein localises to the cytoplasm. The enzyme catalyses chorismate = 4-hydroxybenzoate + pyruvate. It participates in cofactor biosynthesis; ubiquinone biosynthesis. Its function is as follows. Removes the pyruvyl group from chorismate, with concomitant aromatization of the ring, to provide 4-hydroxybenzoate (4HB) for the ubiquinone pathway. The protein is Chorismate pyruvate-lyase of Yersinia pestis bv. Antiqua (strain Angola).